We begin with the raw amino-acid sequence, 387 residues long: Prostatic acid phosphatase (387 aa).

The first 34 residues, 1-34 (MRNAALLMTRATSLRLSLLLLLSFLPDLDGGVRA), serve as a signal peptide directing secretion. Arginine 45 serves as a coordination point for substrate. The Nucleophile role is filled by histidine 46. Residue arginine 49 coordinates substrate. The N-linked (GlcNAc...) asparagine glycan is linked to asparagine 96. Position 113 (arginine 113) interacts with substrate. 3 disulfide bridges follow: cysteine 163–cysteine 374, cysteine 217–cysteine 315, and cysteine 349–cysteine 353. A glycan (N-linked (GlcNAc...) asparagine) is linked at asparagine 222. Histidine 291 provides a ligand contact to substrate. The Proton donor role is filled by aspartate 292. Residue asparagine 335 is glycosylated (N-linked (GlcNAc...) asparagine).

Belongs to the histidine acid phosphatase family. As to quaternary structure, homodimer; dimer formation is required for phosphatase activity.

The protein localises to the secreted. It catalyses the reaction a phosphate monoester + H2O = an alcohol + phosphate. The enzyme catalyses 1-(9Z-octadecenoyl)-sn-glycero-3-phosphate + H2O = 1-(9Z-octadecenoyl)-sn-glycerol + phosphate. The catalysed reaction is O-phospho-L-tyrosyl-[protein] + H2O = L-tyrosyl-[protein] + phosphate. A non-specific tyrosine phosphatase that dephosphorylates a diverse number of substrates under acidic conditions (pH 4-6) including alkyl, aryl, and acyl orthophosphate monoesters and phosphorylated proteins. Has lipid phosphatase activity and inactivates lysophosphatidic acid in seminal plasma. The polypeptide is Prostatic acid phosphatase (ACP3) (Bos taurus (Bovine)).